The chain runs to 411 residues: Glucose-1-phosphate adenylyltransferase (411 aa).

Alpha-D-glucose 1-phosphate contacts are provided by residues Gly164, 179–180 (EK), and Ser197.

This sequence belongs to the bacterial/plant glucose-1-phosphate adenylyltransferase family. In terms of assembly, homotetramer.

The catalysed reaction is alpha-D-glucose 1-phosphate + ATP + H(+) = ADP-alpha-D-glucose + diphosphate. It functions in the pathway glycan biosynthesis; glycogen biosynthesis. Its function is as follows. Involved in the biosynthesis of ADP-glucose, a building block required for the elongation reactions to produce glycogen. Catalyzes the reaction between ATP and alpha-D-glucose 1-phosphate (G1P) to produce pyrophosphate and ADP-Glc. In Corynebacterium kroppenstedtii (strain DSM 44385 / JCM 11950 / CIP 105744 / CCUG 35717), this protein is Glucose-1-phosphate adenylyltransferase.